Here is a 367-residue protein sequence, read N- to C-terminus: Quinolinate synthase (367 aa).

H46 and S63 together coordinate iminosuccinate. C110 serves as a coordination point for [4Fe-4S] cluster. Residues 141-143 and S162 each bind iminosuccinate; that span reads YVN. [4Fe-4S] cluster is bound at residue C229. Iminosuccinate contacts are provided by residues 255–257 and T272; that span reads HPE. Residue C319 participates in [4Fe-4S] cluster binding.

It belongs to the quinolinate synthase family. Type 3 subfamily. It depends on [4Fe-4S] cluster as a cofactor.

The protein localises to the cytoplasm. The catalysed reaction is iminosuccinate + dihydroxyacetone phosphate = quinolinate + phosphate + 2 H2O + H(+). It participates in cofactor biosynthesis; NAD(+) biosynthesis; quinolinate from iminoaspartate: step 1/1. In terms of biological role, catalyzes the condensation of iminoaspartate with dihydroxyacetone phosphate to form quinolinate. The protein is Quinolinate synthase of Bacillus velezensis (strain DSM 23117 / BGSC 10A6 / LMG 26770 / FZB42) (Bacillus amyloliquefaciens subsp. plantarum).